Consider the following 396-residue polypeptide: Purine ribonucleoside efflux pump NepI (396 aa).

Residues 1–21 (MSEFIAENRGADAITRPNWSA) lie on the Cytoplasmic side of the membrane. The chain crosses the membrane as a helical span at residues 22 to 42 (VFSVAFCVACLIIVEFLPVSL). Over 43–54 (LTPMAQDLGISE) the chain is Periplasmic. A helical membrane pass occupies residues 55–75 (GVAGQSVTVTAFVAMFASLFI). Residues 76–85 (TQTIQATDRR) are Cytoplasmic-facing. The helical transmembrane segment at 86 to 106 (NVVILFAVLLTLSCLLVSFAN) threads the bilayer. A topological domain (periplasmic) is located at residue Ser107. The helical transmembrane segment at 108–128 (FSLLLIGRACLGLALGGFWAM) threads the bilayer. Residues 129–147 (SASLTMRLVPPRTVPKALS) lie on the Cytoplasmic side of the membrane. Residues 148-168 (VIFGAVSIALVIAAPLGSFLG) traverse the membrane as a helical segment. Residues 169 to 175 (ELIGWRN) lie on the Periplasmic side of the membrane. Residues 176–196 (VFNAAAVMGVLCIFWIIKSLP) traverse the membrane as a helical segment. Topologically, residues 197 to 215 (SLPGEPSHQKQNTFRLLQR) are cytoplasmic. Residues 216-236 (PGVMAGMIAIFMSFAGQFAFF) traverse the membrane as a helical segment. Residues 237-255 (TYIRPVYMNLAGFSVDGLT) lie on the Periplasmic side of the membrane. Residues 256-276 (LVLLSFGIASFIGTSLSSFIL) traverse the membrane as a helical segment. Residues 277–281 (KRSVK) are Cytoplasmic-facing. The helical transmembrane segment at 282–302 (LALAGAPLILAVSALVLTLWG) threads the bilayer. At 303–305 (SDK) the chain is on the periplasmic side. A helical transmembrane segment spans residues 306 to 326 (IVATGVAIIWGLTFALVPVGW). The Cytoplasmic portion of the chain corresponds to 327 to 343 (STWITRSLADQAEKAGS). Residues 344–364 (IQVAVIQLANTCGAAIGGYAL) traverse the membrane as a helical segment. Topologically, residues 365–366 (DN) are periplasmic. A helical membrane pass occupies residues 367-387 (IGLTSPLMFSGTLMLLTALLV). Topologically, residues 388–396 (TAKVKMKKS) are cytoplasmic.

It belongs to the major facilitator superfamily. DHA1 family. NepI (TC 2.A.1.2.26) subfamily.

It is found in the cell inner membrane. The enzyme catalyses inosine(in) + H(+)(out) = inosine(out) + H(+)(in). It catalyses the reaction guanosine(in) + H(+)(out) = guanosine(out) + H(+)(in). Its function is as follows. Involved in the efflux of purine ribonucleosides, such as inosine and guanosine. This chain is Purine ribonucleoside efflux pump NepI, found in Shigella sonnei (strain Ss046).